Here is a 483-residue protein sequence, read N- to C-terminus: Iron-sulfur cluster assembly SufBD family protein ycf24 (483 aa).

It belongs to the iron-sulfur cluster assembly SufBD family.

The protein localises to the plastid. It is found in the chloroplast. This chain is Iron-sulfur cluster assembly SufBD family protein ycf24 (ycf24), found in Guillardia theta (Cryptophyte).